Reading from the N-terminus, the 165-residue chain is Myosin regulatory light chain 2A, cardiac muscle isoform (165 aa).

Residue Ala-2 is modified to N,N,N-trimethylalanine. EF-hand domains lie at Ala-24–Leu-59, Asp-94–Arg-128, and Phe-129–Lys-164. Residues Asp-37, Asn-39, Asp-41, and Asp-48 each coordinate Ca(2+).

As to quaternary structure, myosin is a hexamer of 2 heavy chains and 4 light chains. Post-translationally, the N-terminus is blocked. N,N,N-trimethylalanine, found in other myosin light chains would not have been detected in the N-terminal tryptic peptide in PubMed:7319048 because it would remain trimethylated and ninhydrin negative after hydrolysis.

This Gallus gallus (Chicken) protein is Myosin regulatory light chain 2A, cardiac muscle isoform.